The sequence spans 171 residues: Peptide deformylase (171 aa).

Cysteine 91 and histidine 133 together coordinate Fe cation. The active site involves glutamate 134. Histidine 137 contributes to the Fe cation binding site.

The protein belongs to the polypeptide deformylase family. Fe(2+) is required as a cofactor.

It catalyses the reaction N-terminal N-formyl-L-methionyl-[peptide] + H2O = N-terminal L-methionyl-[peptide] + formate. Removes the formyl group from the N-terminal Met of newly synthesized proteins. Requires at least a dipeptide for an efficient rate of reaction. N-terminal L-methionine is a prerequisite for activity but the enzyme has broad specificity at other positions. The protein is Peptide deformylase of Edwardsiella ictaluri (strain 93-146).